The following is a 558-amino-acid chain: Potassium-transporting ATPase potassium-binding subunit (558 aa).

Helical transmembrane passes span 1-21 (MDTLAGILQVASVVLVLVLVH), 58-78 (WPAYLRAVLAFSLVGVLVVYG), 85-105 (FLPYALGLPAVPEGISFNTAV), 130-150 (GLAVQNFVSAAVGIAVAIALV), 179-199 (LSLVTAVVLIAGGVIQNFAGF), 245-265 (PTAWTSAFQVLLMLVIPFSLP), 279-299 (TAIAAVMATIAVASLTALTLF), 374-394 (GLYGMLVLAVIAVFVAGLLVG), 416-436 (ILVTPILVLVGTALSFAIPAV), 484-504 (ALGVAMLLGRFVPIVLVLALA), and 527-547 (FVGLLIGVTVIVTALTYFPVL).

Belongs to the KdpA family. As to quaternary structure, the system is composed of three essential subunits: KdpA, KdpB and KdpC.

It localises to the cell membrane. Part of the high-affinity ATP-driven potassium transport (or Kdp) system, which catalyzes the hydrolysis of ATP coupled with the electrogenic transport of potassium into the cytoplasm. This subunit binds the extracellular potassium ions and delivers the ions to the membrane domain of KdpB through an intramembrane tunnel. This is Potassium-transporting ATPase potassium-binding subunit from Clavibacter sepedonicus (Clavibacter michiganensis subsp. sepedonicus).